We begin with the raw amino-acid sequence, 363 residues long: NADH-quinone oxidoreductase subunit H (363 aa).

The next 10 helical transmembrane spans lie at 29 to 49 (VLKILLIAVPVIVAVAFYVVW), 62 to 82 (GPMYVGMGIFQAFADVFKLLF), 96 to 116 (FVIAPLLTLAPAFAAWSVVPF), 127 to 147 (VGLLYLLAMTSLGVYGIILAG), 163 to 183 (AAQVVSYEIAMGFALVGVMIA), 202 to 222 (FFDWFLIPLFPLFIVYWVSGV), 238 to 257 (EIVAGHMVEYSGGAFALFFL), 264 to 286 (ILVSFLISIFFLGGWLSPIQGWV), 299 to 319 (KGGWPWLLMKVFFFASAYIWF), and 339 to 359 (FIPLTIVWIAVTALMVFYGVI).

The protein belongs to the complex I subunit 1 family. In terms of assembly, NDH-1 is composed of 14 different subunits. Subunits NuoA, H, J, K, L, M, N constitute the membrane sector of the complex.

It is found in the cell inner membrane. The enzyme catalyses a quinone + NADH + 5 H(+)(in) = a quinol + NAD(+) + 4 H(+)(out). NDH-1 shuttles electrons from NADH, via FMN and iron-sulfur (Fe-S) centers, to quinones in the respiratory chain. The immediate electron acceptor for the enzyme in this species is believed to be ubiquinone. Couples the redox reaction to proton translocation (for every two electrons transferred, four hydrogen ions are translocated across the cytoplasmic membrane), and thus conserves the redox energy in a proton gradient. This subunit may bind ubiquinone. The chain is NADH-quinone oxidoreductase subunit H from Xanthomonas euvesicatoria pv. vesicatoria (strain 85-10) (Xanthomonas campestris pv. vesicatoria).